A 124-amino-acid polypeptide reads, in one-letter code: Fluoride-specific ion channel FluC (124 aa).

The next 4 helical transmembrane spans lie at 6 to 26 (LLIG…SGIV), 37 to 57 (LAVN…SLFA), 69 to 89 (TGFC…FVLV), and 92 to 112 (GLLF…LIMV). Residues Gly73 and Thr76 each coordinate Na(+).

Belongs to the fluoride channel Fluc/FEX (TC 1.A.43) family.

Its subcellular location is the cell membrane. It carries out the reaction fluoride(in) = fluoride(out). Na(+) is not transported, but it plays an essential structural role and its presence is essential for fluoride channel function. Functionally, fluoride-specific ion channel. Important for reducing fluoride concentration in the cell, thus reducing its toxicity. The sequence is that of Fluoride-specific ion channel FluC from Methanocaldococcus jannaschii (strain ATCC 43067 / DSM 2661 / JAL-1 / JCM 10045 / NBRC 100440) (Methanococcus jannaschii).